The chain runs to 656 residues: FAST kinase domain-containing protein 3, mitochondrial (656 aa).

The RAP domain maps to 587–645 (VALCIDGPQRFCLGSKHLLGKEAIKQRHLRLLGYQVVQVPYHELELLTSRLELVDYLQR).

It belongs to the FAST kinase family.

The protein localises to the mitochondrion. Required for normal mitochondrial respiration. Increases steady-state levels and half-lives of a subset of mature mitochondrial mRNAs MT-ND2, MT-ND3, MT-CYTB, MT-CO2, and MT-ATP8/6. Promotes MT-CO1 mRNA translation and increases mitochondrial complex IV assembly and activity. The sequence is that of FAST kinase domain-containing protein 3, mitochondrial (Fastkd3) from Rattus norvegicus (Rat).